The primary structure comprises 562 residues: Dihydroxy-acid dehydratase (562 aa).

Asp-80 is a Mg(2+) binding site. Cys-121 serves as a coordination point for [2Fe-2S] cluster. Asp-122 and Lys-123 together coordinate Mg(2+). Lys-123 bears the N6-carboxylysine mark. Cys-194 contacts [2Fe-2S] cluster. A Mg(2+)-binding site is contributed by Glu-446. Residue Ser-472 is the Proton acceptor of the active site.

This sequence belongs to the IlvD/Edd family. As to quaternary structure, homodimer. [2Fe-2S] cluster serves as cofactor. Mg(2+) is required as a cofactor.

It catalyses the reaction (2R)-2,3-dihydroxy-3-methylbutanoate = 3-methyl-2-oxobutanoate + H2O. The catalysed reaction is (2R,3R)-2,3-dihydroxy-3-methylpentanoate = (S)-3-methyl-2-oxopentanoate + H2O. It functions in the pathway amino-acid biosynthesis; L-isoleucine biosynthesis; L-isoleucine from 2-oxobutanoate: step 3/4. It participates in amino-acid biosynthesis; L-valine biosynthesis; L-valine from pyruvate: step 3/4. Functions in the biosynthesis of branched-chain amino acids. Catalyzes the dehydration of (2R,3R)-2,3-dihydroxy-3-methylpentanoate (2,3-dihydroxy-3-methylvalerate) into 2-oxo-3-methylpentanoate (2-oxo-3-methylvalerate) and of (2R)-2,3-dihydroxy-3-methylbutanoate (2,3-dihydroxyisovalerate) into 2-oxo-3-methylbutanoate (2-oxoisovalerate), the penultimate precursor to L-isoleucine and L-valine, respectively. The polypeptide is Dihydroxy-acid dehydratase (Macrococcus caseolyticus (strain JCSC5402) (Macrococcoides caseolyticum)).